The chain runs to 140 residues: Transcription antitermination protein NusB (140 aa).

This sequence belongs to the NusB family.

Its function is as follows. Involved in transcription antitermination. Required for transcription of ribosomal RNA (rRNA) genes. Binds specifically to the boxA antiterminator sequence of the ribosomal RNA (rrn) operons. The protein is Transcription antitermination protein NusB of Elusimicrobium minutum (strain Pei191).